A 211-amino-acid polypeptide reads, in one-letter code: Ribonuclease T (211 aa).

In terms of domain architecture, Exonuclease spans 24-198; sequence VVVDVETGGF…YDAEKTAHLF (175 aa). Mg(2+)-binding residues include D27, E29, H185, and D190. Residue H185 is the Proton donor/acceptor of the active site.

Belongs to the RNase T family. As to quaternary structure, homodimer. Mg(2+) serves as cofactor.

Functionally, trims short 3' overhangs of a variety of RNA species, leaving a one or two nucleotide 3' overhang. Responsible for the end-turnover of tRNA: specifically removes the terminal AMP residue from uncharged tRNA (tRNA-C-C-A). Also appears to be involved in tRNA biosynthesis. The polypeptide is Ribonuclease T (Xylella fastidiosa (strain 9a5c)).